The primary structure comprises 125 residues: Large ribosomal subunit protein bL12 (125 aa).

A disordered region spans residues 96-125; sequence PAPVKEGATKDEAEEIKKKIEEAGGTAELK. A compositionally biased stretch (basic and acidic residues) spans 102–117; it reads GATKDEAEEIKKKIEE.

Belongs to the bacterial ribosomal protein bL12 family. In terms of assembly, homodimer. Part of the ribosomal stalk of the 50S ribosomal subunit. Forms a multimeric L10(L12)X complex, where L10 forms an elongated spine to which 2 to 4 L12 dimers bind in a sequential fashion. Binds GTP-bound translation factors.

Functionally, forms part of the ribosomal stalk which helps the ribosome interact with GTP-bound translation factors. Is thus essential for accurate translation. The chain is Large ribosomal subunit protein bL12 from Alcanivorax borkumensis (strain ATCC 700651 / DSM 11573 / NCIMB 13689 / SK2).